Here is a 296-residue protein sequence, read N- to C-terminus: GTPase Era (296 aa).

In terms of domain architecture, Era-type G spans 7–174; the sequence is RTGFVAIVGR…LEEIAQRLPE (168 aa). A G1 region spans residues 15–22; it reads GRPNVGKS. A GTP-binding site is contributed by 15 to 22; sequence GRPNVGKS. A G2 region spans residues 41–45; sequence QTTRH. The segment at 62 to 65 is G3; it reads DTPG. GTP-binding positions include 62–66 and 123–126; these read DTPGF and SKID. The tract at residues 123–126 is G4; it reads SKID. Residues 153-155 are G5; sequence VSA. Positions 197 to 281 constitute a KH type-2 domain; that stretch reads VREKIFRLVG…HLEVYIKVRK (85 aa).

This sequence belongs to the TRAFAC class TrmE-Era-EngA-EngB-Septin-like GTPase superfamily. Era GTPase family. As to quaternary structure, monomer.

Its subcellular location is the cytoplasm. It localises to the cell inner membrane. Functionally, an essential GTPase that binds both GDP and GTP, with rapid nucleotide exchange. Plays a role in 16S rRNA processing and 30S ribosomal subunit biogenesis and possibly also in cell cycle regulation and energy metabolism. In Bordetella avium (strain 197N), this protein is GTPase Era.